The primary structure comprises 422 residues: Protein phosphatase methylesterase 1 (422 aa).

Residues 1 to 27 form a disordered region; that stretch reads MSDMFRKSVLNKLPHLPPTRAPWADES. Catalysis depends on residues Ser207, Asp234, and His371.

The protein belongs to the AB hydrolase superfamily.

The enzyme catalyses [phosphatase 2A protein]-C-terminal L-leucine methyl ester + H2O = [phosphatase 2A protein]-C-terminal L-leucine + methanol + H(+). Functionally, demethylates proteins that have been reversibly carboxymethylated. Demethylates the phosphatase PP2A catalytic subunit. This chain is Protein phosphatase methylesterase 1 (PPE1), found in Cryptococcus neoformans var. neoformans serotype D (strain JEC21 / ATCC MYA-565) (Filobasidiella neoformans).